Reading from the N-terminus, the 253-residue chain is Hydroxyacylglutathione hydrolase (253 aa).

Zn(2+)-binding residues include His54, His56, Asp58, His59, His112, Asp131, and His169.

The protein belongs to the metallo-beta-lactamase superfamily. Glyoxalase II family. As to quaternary structure, monomer. The cofactor is Zn(2+).

The catalysed reaction is an S-(2-hydroxyacyl)glutathione + H2O = a 2-hydroxy carboxylate + glutathione + H(+). Its pathway is secondary metabolite metabolism; methylglyoxal degradation; (R)-lactate from methylglyoxal: step 2/2. Thiolesterase that catalyzes the hydrolysis of S-D-lactoyl-glutathione to form glutathione and D-lactic acid. This is Hydroxyacylglutathione hydrolase from Bartonella henselae (strain ATCC 49882 / DSM 28221 / CCUG 30454 / Houston 1) (Rochalimaea henselae).